The following is a 200-amino-acid chain: Probable molybdenum cofactor guanylyltransferase (200 aa).

GTP is bound by residues 9-11 (LAG), K21, D69, and D100. A Mg(2+)-binding site is contributed by D100.

This sequence belongs to the MobA family. Mg(2+) is required as a cofactor.

It is found in the cytoplasm. It catalyses the reaction Mo-molybdopterin + GTP + H(+) = Mo-molybdopterin guanine dinucleotide + diphosphate. Transfers a GMP moiety from GTP to Mo-molybdopterin (Mo-MPT) cofactor (Moco or molybdenum cofactor) to form Mo-molybdopterin guanine dinucleotide (Mo-MGD) cofactor. This chain is Probable molybdenum cofactor guanylyltransferase, found in Bacillus cereus (strain AH820).